Here is a 78-residue protein sequence, read N- to C-terminus: D-alanyl carrier protein (78 aa).

Residues 1–78 (MEFKNQVYGI…HIAEQLAEMK (78 aa)) form the Carrier domain. Position 36 is an O-(pantetheine 4'-phosphoryl)serine (serine 36).

Belongs to the DltC family. 4'-phosphopantetheine is transferred from CoA to a specific serine of apo-DCP.

Its subcellular location is the cytoplasm. The protein operates within cell wall biogenesis; lipoteichoic acid biosynthesis. Its function is as follows. Carrier protein involved in the D-alanylation of lipoteichoic acid (LTA). The loading of thioester-linked D-alanine onto DltC is catalyzed by D-alanine--D-alanyl carrier protein ligase DltA. The DltC-carried D-alanyl group is further transferred to cell membrane phosphatidylglycerol (PG) by forming an ester bond, probably catalyzed by DltD. D-alanylation of LTA plays an important role in modulating the properties of the cell wall in Gram-positive bacteria, influencing the net charge of the cell wall. In Bacillus pumilus (strain SAFR-032), this protein is D-alanyl carrier protein.